We begin with the raw amino-acid sequence, 394 residues long: Dual-specificity RNA methyltransferase RlmN (394 aa).

The active-site Proton acceptor is E115. Residues 121–360 enclose the Radical SAM core domain; that stretch reads EADRATLCVS…VIVRKTRGDD (240 aa). An intrachain disulfide couples C128 to C365. C135, C139, and C142 together coordinate [4Fe-4S] cluster. S-adenosyl-L-methionine-binding positions include 189 to 190, S221, 243 to 245, and N322; these read GE and SLH. C365 (S-methylcysteine intermediate) is an active-site residue.

The protein belongs to the radical SAM superfamily. RlmN family. Requires [4Fe-4S] cluster as cofactor.

The protein localises to the cytoplasm. It carries out the reaction adenosine(2503) in 23S rRNA + 2 reduced [2Fe-2S]-[ferredoxin] + 2 S-adenosyl-L-methionine = 2-methyladenosine(2503) in 23S rRNA + 5'-deoxyadenosine + L-methionine + 2 oxidized [2Fe-2S]-[ferredoxin] + S-adenosyl-L-homocysteine. The enzyme catalyses adenosine(37) in tRNA + 2 reduced [2Fe-2S]-[ferredoxin] + 2 S-adenosyl-L-methionine = 2-methyladenosine(37) in tRNA + 5'-deoxyadenosine + L-methionine + 2 oxidized [2Fe-2S]-[ferredoxin] + S-adenosyl-L-homocysteine. Its function is as follows. Specifically methylates position 2 of adenine 2503 in 23S rRNA and position 2 of adenine 37 in tRNAs. m2A2503 modification seems to play a crucial role in the proofreading step occurring at the peptidyl transferase center and thus would serve to optimize ribosomal fidelity. This is Dual-specificity RNA methyltransferase RlmN from Pasteurella multocida (strain Pm70).